The chain runs to 753 residues: 5-methyltetrahydropteroyltriglutamate--homocysteine methyltransferase (753 aa).

Residues 17–20 (RELK) and Lys117 contribute to the 5-methyltetrahydropteroyltri-L-glutamate site. Residues 431-433 (IGS) and Glu484 each bind L-homocysteine. L-methionine is bound by residues 431–433 (IGS) and Glu484. Residues 515–516 (RC) and Trp561 each bind 5-methyltetrahydropteroyltri-L-glutamate. An L-homocysteine-binding site is contributed by Asp599. Asp599 is a binding site for L-methionine. A 5-methyltetrahydropteroyltri-L-glutamate-binding site is contributed by Glu605. Zn(2+) is bound by residues His641, Cys643, and Glu665. Residue His694 is the Proton donor of the active site. Position 726 (Cys726) interacts with Zn(2+).

The protein belongs to the vitamin-B12 independent methionine synthase family. It depends on Zn(2+) as a cofactor.

The catalysed reaction is 5-methyltetrahydropteroyltri-L-glutamate + L-homocysteine = tetrahydropteroyltri-L-glutamate + L-methionine. The protein operates within amino-acid biosynthesis; L-methionine biosynthesis via de novo pathway; L-methionine from L-homocysteine (MetE route): step 1/1. In terms of biological role, catalyzes the transfer of a methyl group from 5-methyltetrahydrofolate to homocysteine resulting in methionine formation. In Escherichia coli O139:H28 (strain E24377A / ETEC), this protein is 5-methyltetrahydropteroyltriglutamate--homocysteine methyltransferase.